The sequence spans 537 residues: Cytochrome c oxidase subunit 1 (537 aa).

The chain crosses the membrane as a helical span at residues 22-42 (ILYLLFGLVSGIIGSVFSFII). Ca(2+)-binding residues include glutamate 45, alanine 48, and glycine 50. A Fe(II)-heme a-binding site is contributed by histidine 68. Helical transmembrane passes span 70 to 90 (ILMIFFFIIPALFGAFGNYLV), 104 to 124 (VNNFTFWLLPPALMLLLISAL), 152 to 172 (LAILSLQLTGISSTLGSVNLI), 190 to 210 (LFAWAIMITSILLLLTLPVLA), 241 to 261 (LFWFFGHPEVYILIMPAFGVV), 279 to 299 (MLWAMLSIALLGLMVWSHHLF), 318 to 338 (IAIPTGIKIFSWLATLTGGAI), and 345 to 365 (MLYAIGFLILFTIGGLTGVIL). Histidine 247 lines the Cu cation pocket. A cross-link (1'-histidyl-3'-tyrosine (His-Tyr)) is located at residues 247–251 (HPEVY). Tyrosine 251 provides a ligand contact to O2. Histidine 296 and histidine 297 together coordinate Cu cation. The Mg(2+) site is built by histidine 375 and aspartate 376. 2 consecutive transmembrane segments (helical) span residues 379 to 399 (FVVAHFHYVLSMGALFGLCGA) and 418 to 438 (IQFWILFIGVNIVFGPQHFLG). Heme a3 is bound at residue histidine 383. Histidine 385 contacts Fe(II)-heme a. Proline 447 serves as a coordination point for Ca(2+). A helical transmembrane segment spans residues 458-478 (FVSSIGSVISILSLFLFMYVM).

It belongs to the heme-copper respiratory oxidase family. As to quaternary structure, component of the cytochrome c oxidase (complex IV, CIV), a multisubunit enzyme composed of a catalytic core of 3 subunits and several supernumerary subunits. The complex exists as a monomer or a dimer and forms supercomplexes (SCs) in the inner mitochondrial membrane with ubiquinol-cytochrome c oxidoreductase (cytochrome b-c1 complex, complex III, CIII). It depends on heme as a cofactor. Cu cation is required as a cofactor.

It localises to the mitochondrion inner membrane. It catalyses the reaction 4 Fe(II)-[cytochrome c] + O2 + 8 H(+)(in) = 4 Fe(III)-[cytochrome c] + 2 H2O + 4 H(+)(out). The protein operates within energy metabolism; oxidative phosphorylation. Functionally, component of the cytochrome c oxidase, the last enzyme in the mitochondrial electron transport chain which drives oxidative phosphorylation. The respiratory chain contains 3 multisubunit complexes succinate dehydrogenase (complex II, CII), ubiquinol-cytochrome c oxidoreductase (cytochrome b-c1 complex, complex III, CIII) and cytochrome c oxidase (complex IV, CIV), that cooperate to transfer electrons derived from NADH and succinate to molecular oxygen, creating an electrochemical gradient over the inner membrane that drives transmembrane transport and the ATP synthase. Cytochrome c oxidase is the component of the respiratory chain that catalyzes the reduction of oxygen to water. Electrons originating from reduced cytochrome c in the intermembrane space (IMS) are transferred via the dinuclear copper A center (CU(A)) of subunit 2 and heme A of subunit 1 to the active site in subunit 1, a binuclear center (BNC) formed by heme A3 and copper B (CU(B)). The BNC reduces molecular oxygen to 2 water molecules using 4 electrons from cytochrome c in the IMS and 4 protons from the mitochondrial matrix. The protein is Cytochrome c oxidase subunit 1 (cox1) of Schizosaccharomyces pombe (strain 972 / ATCC 24843) (Fission yeast).